Consider the following 493-residue polypeptide: tRNA(Ile)-lysidine synthase, chloroplastic (493 aa).

68–73 contacts ATP; sequence SGGQDS.

It belongs to the tRNA(Ile)-lysidine synthase family.

The protein resides in the plastid. Its subcellular location is the chloroplast. The catalysed reaction is cytidine(34) in tRNA(Ile2) + L-lysine + ATP = lysidine(34) in tRNA(Ile2) + AMP + diphosphate + H(+). In terms of biological role, ligates lysine onto the cytidine present at position 34 of the AUA codon-specific tRNA(Ile) that contains the anticodon CAU, in an ATP-dependent manner. Cytidine is converted to lysidine, thus changing the amino acid specificity of the tRNA from methionine to isoleucine. The sequence is that of tRNA(Ile)-lysidine synthase, chloroplastic from Staurastrum punctulatum (Green alga).